A 249-amino-acid polypeptide reads, in one-letter code: UPF0758 protein BMEI0718 (249 aa).

Positions 1-34 (MAKKKDTPGDGEFPGFSDTLQRTPKLEKPHYAGH) are disordered. Over residues 24–34 (PKLEKPHYAGH) the composition is skewed to basic and acidic residues. Residues 127–249 (VLGSWDKVIN…HASLRSLRLI (123 aa)) enclose the MPN domain. Zn(2+)-binding residues include H198, H200, and D211. Residues 198–211 (HNHPSGDPTPSRAD) carry the JAMM motif motif.

It belongs to the UPF0758 family.

This is UPF0758 protein BMEI0718 from Brucella melitensis biotype 1 (strain ATCC 23456 / CCUG 17765 / NCTC 10094 / 16M).